Here is a 78-residue protein sequence, read N- to C-terminus: RNA-binding protein Hfq (78 aa).

The Sm domain occupies 10-69 (DPFLNALRREHVPVSIYLVNGIKLQGQVESFDQYVVLLKNTVTQMVYKHAISTVVPARPV).

Belongs to the Hfq family. As to quaternary structure, homohexamer.

Functionally, RNA chaperone that binds small regulatory RNA (sRNAs) and mRNAs to facilitate mRNA translational regulation in response to envelope stress, environmental stress and changes in metabolite concentrations. Also binds with high specificity to tRNAs. This Dechloromonas aromatica (strain RCB) protein is RNA-binding protein Hfq.